Reading from the N-terminus, the 495-residue chain is Bile acid-sensitive ion channel (495 aa).

The binds the plasma membrane and stabilizes the channel in the closed state stretch occupies residues 1-30 (MEHTEKSQVHAEKGLLGKIKRYLSKRPLPS). Residues 1–61 (MEHTEKSQVH…NIAQNQNKVR (61 aa)) lie on the Cytoplasmic side of the membrane. A helical membrane pass occupies residues 62–82 (KVIWLAVVLGSVSLLVWQIYS). The Extracellular segment spans residues 83-459 (RLVNYFTWPT…GLFCGASLIT (377 aa)). 6 cysteine pairs are disulfide-bonded: C112–C207, C185–C192, C298–C377, C315–C373, C328–C350, and C330–C342. N-linked (GlcNAc...) asparagine glycosylation is found at N147, N163, and N179. N-linked (GlcNAc...) asparagine glycosylation is found at N370, N405, and N421. Residues 454–456 (GAS) carry the GAS motif; ion selectivity filter motif. A helical transmembrane segment spans residues 460–480 (IIEIIEYFFTNFYWVLIFFLL). Topologically, residues 481–495 (KILETIQRTSPPQAV) are cytoplasmic.

The protein belongs to the amiloride-sensitive sodium channel (TC 1.A.6) family. ASIC5 subfamily. As to quaternary structure, forms homotrimeric channels. Expressed by cholangiocytes (at protein level). Detected in cerebellum, brainstem, kidney, liver, hepatocytes, lung, intestine and embryo. In the cerebellum, restricted to interneurons in the granular layer, specifically in GRM1-expressing unipolar brush cells of the vestibulocerebellum.

Its subcellular location is the apical cell membrane. The protein resides in the cell membrane. It carries out the reaction Na(+)(in) = Na(+)(out). The catalysed reaction is Li(+)(in) = Li(+)(out). It catalyses the reaction K(+)(in) = K(+)(out). The enzyme catalyses H(+)(in) = H(+)(out). With respect to regulation, inhibited by the diuretic drug amiloride. Contrary to its rat ortholog it is not inhibited by Ca(2+). In terms of biological role, forms bile acid-gated sodium channels and may play a role in bile acid-dependent absorption and secretion by epithelial cells of the bile ducts. Displays high selectivity for sodium ions but can also permit the permeation of other cations. The gating could be indirect and the consequence of alterations of the membrane environment of the channel by bile acids. As a sodium channel of type II unipolar brush cells of the vestibulocerebellum, controlling the electrical activity of these cells, could play a role in motor coordination and balance. The chain is Bile acid-sensitive ion channel from Mus musculus (Mouse).